We begin with the raw amino-acid sequence, 297 residues long: MSGPPPPYEEQSSHLYGQPASSQDGNAFIPEDFKYSTVVISCEPIIRQRFMHKVYSLLSCQLLASLSFCYWASVSTSLQNFIMSHIALFYICMVVSLVSCIWLAVSPRPEDYEASVPEPLLTGSSEEPAQEQRRLPWYVLSSYKQKLTLLSIFTLSEAYCLSLVTLAYDKDTVLSALLITTIVVVGVSLTALSERFENVLNSATSIYYWLNWGLWIMIGMGLTALLFGWNTHSSKFNLLYGWLGAILFTAYLFIDTQLIFRKVYPDEEVRCAMMLYLDIVNLFLSILRILANSNDDN.

Residues 1-53 (MSGPPPPYEEQSSHLYGQPASSQDGNAFIPEDFKYSTVVISCEPIIRQRFMHK) are Lumenal-facing. The chain crosses the membrane as a helical span at residues 54–74 (VYSLLSCQLLASLSFCYWASV). Topologically, residues 75 to 85 (STSLQNFIMSH) are cytoplasmic. A helical transmembrane segment spans residues 86-106 (IALFYICMVVSLVSCIWLAVS). Over 107 to 146 (PRPEDYEASVPEPLLTGSSEEPAQEQRRLPWYVLSSYKQK) the chain is Lumenal. Residues 147–167 (LTLLSIFTLSEAYCLSLVTLA) form a helical membrane-spanning segment. At 168–171 (YDKD) the chain is on the cytoplasmic side. The chain crosses the membrane as a helical span at residues 172-192 (TVLSALLITTIVVVGVSLTAL). Residues 193–208 (SERFENVLNSATSIYY) lie on the Lumenal side of the membrane. Residues 209–229 (WLNWGLWIMIGMGLTALLFGW) traverse the membrane as a helical segment. At 230–239 (NTHSSKFNLL) the chain is on the cytoplasmic side. The helical transmembrane segment at 240–260 (YGWLGAILFTAYLFIDTQLIF) threads the bilayer. Residues 261–270 (RKVYPDEEVR) are Lumenal-facing. A helical transmembrane segment spans residues 271 to 291 (CAMMLYLDIVNLFLSILRILA). The Cytoplasmic portion of the chain corresponds to 292 to 297 (NSNDDN).

It belongs to the BI1 family. LFG subfamily.

It is found in the endoplasmic reticulum membrane. Its subcellular location is the vacuole membrane. The protein localises to the mitochondrion membrane. Its function is as follows. Links the unfolded protein response and programmed cell death and mediates mitochondrial-dependent apoptosis. Induces cell death and disruption of the mitochondrial transmembrane potential via the mitochondrial phosphate carrier MIR1. Dispensible for starvation-induced autophagy. The chain is Bax inhibitor 1 (BXI1) from Saccharomyces cerevisiae (strain ATCC 204508 / S288c) (Baker's yeast).